Reading from the N-terminus, the 444-residue chain is Deoxyguanosinetriphosphate triphosphohydrolase-like protein (444 aa).

Residues 1–26 (MTESLWHERRLTEEKKRRNDHRSPYQ) form a disordered region. The 192-residue stretch at 59–250 (RLTHSLEVSQ…MELADDIAYA (192 aa)) folds into the HD domain.

It belongs to the dGTPase family. Type 2 subfamily.

This chain is Deoxyguanosinetriphosphate triphosphohydrolase-like protein, found in Shewanella sediminis (strain HAW-EB3).